The chain runs to 304 residues: Aquaglyceroporin-3 (304 aa).

Residues methionine 1–glycine 68 are Cytoplasmic-facing. A helical membrane pass occupies residues glutamate 69–isoleucine 89. Residues aspartate 90–phenylalanine 95 are Extracellular-facing. Residues leucine 96 to isoleucine 116 traverse the membrane as a helical segment. At serine 117–glycine 142 the chain is on the cytoplasmic side. The chain crosses the membrane as a helical span at residues tyrosine 143–alanine 163. Over aspartate 164–leucine 196 the chain is Extracellular. A helical transmembrane segment spans residues phenylalanine 197 to isoleucine 217. Residues phenylalanine 218–leucine 231 are Cytoplasmic-facing. The helical transmembrane segment at alanine 232–isoleucine 252 threads the bilayer. Over asparagine 253 to asparagine 277 the chain is Extracellular. The chain crosses the membrane as a helical span at residues tyrosine 278–tyrosine 298. Over lysine 299–histidine 304 the chain is Cytoplasmic.

The protein belongs to the MIP/aquaporin (TC 1.A.8) family.

The protein localises to the cell membrane. It carries out the reaction glycerol(in) = glycerol(out). It catalyses the reaction H2O(in) = H2O(out). The catalysed reaction is urea(in) = urea(out). Mediates water and glycerol transport across the cell membrane. Permeable to urea. Permeable to methylamine/methylammonium. Permeable to dihydroxyacetone. Permeable to erythritol and ribitol. The polypeptide is Aquaglyceroporin-3 (Trypanosoma brucei brucei).